A 474-amino-acid chain; its full sequence is Bifunctional protein HldE (474 aa).

The tract at residues 1–318 is ribokinase; it reads MKVTLPDFNK…ENAIRGRADN (318 aa). 195–198 is an ATP binding site; that stretch reads NMSE. Residue Asp264 is part of the active site. Residues 344–474 form a cytidylyltransferase region; it reads MTNGCFDILH…TNIINAIKKK (131 aa).

The protein in the N-terminal section; belongs to the carbohydrate kinase PfkB family. This sequence in the C-terminal section; belongs to the cytidylyltransferase family. In terms of assembly, homodimer.

It catalyses the reaction D-glycero-beta-D-manno-heptose 7-phosphate + ATP = D-glycero-beta-D-manno-heptose 1,7-bisphosphate + ADP + H(+). It carries out the reaction D-glycero-beta-D-manno-heptose 1-phosphate + ATP + H(+) = ADP-D-glycero-beta-D-manno-heptose + diphosphate. It participates in nucleotide-sugar biosynthesis; ADP-L-glycero-beta-D-manno-heptose biosynthesis; ADP-L-glycero-beta-D-manno-heptose from D-glycero-beta-D-manno-heptose 7-phosphate: step 1/4. Its pathway is nucleotide-sugar biosynthesis; ADP-L-glycero-beta-D-manno-heptose biosynthesis; ADP-L-glycero-beta-D-manno-heptose from D-glycero-beta-D-manno-heptose 7-phosphate: step 3/4. Its function is as follows. Catalyzes the phosphorylation of D-glycero-D-manno-heptose 7-phosphate at the C-1 position to selectively form D-glycero-beta-D-manno-heptose-1,7-bisphosphate. In terms of biological role, catalyzes the ADP transfer from ATP to D-glycero-beta-D-manno-heptose 1-phosphate, yielding ADP-D-glycero-beta-D-manno-heptose. The protein is Bifunctional protein HldE of Proteus mirabilis (strain HI4320).